The chain runs to 321 residues: Cytochrome c biogenesis protein CcsA (321 aa).

The next 8 helical transmembrane spans lie at 17–37 (IVSI…IVGL), 44–64 (GMIS…IYSG), 71–91 (LYES…IPYF), 98–118 (LSLV…SGLL), 143–163 (MVLS…LLVI), 225–245 (VISL…VWAN), 258–275 (ETWA…LHTR), and 286–306 (AIVA…VNLL).

Belongs to the CcmF/CycK/Ccl1/NrfE/CcsA family. May interact with Ccs1.

It is found in the plastid. The protein resides in the chloroplast thylakoid membrane. Functionally, required during biogenesis of c-type cytochromes (cytochrome c6 and cytochrome f) at the step of heme attachment. In Buxus microphylla (Littleleaf boxwood), this protein is Cytochrome c biogenesis protein CcsA.